We begin with the raw amino-acid sequence, 453 residues long: Serine/threonine-protein phosphatase 2A regulatory subunit B'' subunit gamma (453 aa).

EF-hand domains lie at 273-308 (PSAL…TMTN) and 341-376 (KEPA…IQEL). The Ca(2+) site is built by Asp286, Asp288, Asn290, Met292, and Glu297.

In terms of assembly, interacts with MCM3AP/GANP. Interacts with PPP5C, and the phosphatase 2A core enzyme composed of the PPP2CA catalytic subunit and the constant regulatory subunit PPP2R1A. Finds in a complex with ABCB1, TFPI2 and PPP2R3C; leading to the dephosphorylation of ABCB1. Ubiquitously expressed in brain and other tissues.

It is found in the nucleus. Its subcellular location is the cytoplasm. Functionally, may regulate MCM3AP phosphorylation through phosphatase recruitment. May act as a negative regulator of ABCB1 expression and function through the dephosphorylation of ABCB1 by TFPI2/PPP2R3C complex. May play a role in the activation-induced cell death of B-cells. This is Serine/threonine-protein phosphatase 2A regulatory subunit B'' subunit gamma (PPP2R3C) from Homo sapiens (Human).